Reading from the N-terminus, the 255-residue chain is Wtf element wtf15 (255 aa).

The interval 19-78 is disordered; it reads KAGHEIDLEGSPPSEHNSEEKSTLPSNSDILTSANPVSQASETPDHSIESNTGSTQSPTS. Composition is skewed to polar residues over residues 41–60 and 67–78; these read TLPS…QASE and ESNTGSTQSPTS. The next 3 helical transmembrane spans lie at 85–105, 112–132, and 162–182; these read FSFC…CVLP, FLIA…SGSI, and FLKT…LVLL.

The protein belongs to the WTF family.

Its subcellular location is the spore membrane. Functionally, may act in meiotic drive. This is Wtf element wtf15 from Schizosaccharomyces kambucha (Fission yeast).